A 360-amino-acid polypeptide reads, in one-letter code: MEMDLPVSAIGFEGFEKRLEISFVEPGLFADPNGKGLRSLSKAQLDEILGPAECTIVDNLSNDYVDSYVLSESSLFVYSYKIIIKTCGTTKLLLAIPPILRLAETLSLKVQDVRYTRGSFIFPGAQSFPHRHFSEEVAVLDGYFGKLAAGSKAVIMGSPDKTQKWHVYSASAGSVQSNDPVYTLEMCMTGLDREKASVFYKTEESSAAHMTVRSGIRKILPKSEICDFEFEPCGYSMNSIEGAAVSTIHITPEDGFTYASFESVGYNPKTMELGPLVERVLACFEPAEFSVALHADVATKLLERICSVDVKGYSLAEWSPEEFGEGGSIVYQKFTRTPYCESPKSVLKGCWKEEEKEGKE.

Catalysis depends on residues Glu13 and Glu16. Ser73 functions as the Schiff-base intermediate with substrate; via pyruvic acid in the catalytic mechanism. Residue Ser73 is modified to Pyruvic acid (Ser); by autocatalysis. Residue Cys87 is the Proton donor; for catalytic activity of the active site. Residues Ser236 and His249 each act as proton acceptor; for processing activity in the active site.

This sequence belongs to the eukaryotic AdoMetDC family. The cofactor is pyruvate. Post-translationally, is synthesized initially as an inactive proenzyme. Formation of the active enzyme involves a self-maturation process in which the active site pyruvoyl group is generated from an internal serine residue via an autocatalytic post-translational modification. Two non-identical subunits are generated from the proenzyme in this reaction, and the pyruvate is formed at the N-terminus of the alpha chain, which is derived from the carboxyl end of the proenzyme. The post-translation cleavage follows an unusual pathway, termed non-hydrolytic serinolysis, in which the side chain hydroxyl group of the serine supplies its oxygen atom to form the C-terminus of the beta chain, while the remainder of the serine residue undergoes an oxidative deamination to produce ammonia and the pyruvoyl group blocking the N-terminus of the alpha chain. Stolon, also expressed in leaves, stems and roots.

The enzyme catalyses S-adenosyl-L-methionine + H(+) = S-adenosyl 3-(methylsulfanyl)propylamine + CO2. It functions in the pathway amine and polyamine biosynthesis; S-adenosylmethioninamine biosynthesis; S-adenosylmethioninamine from S-adenosyl-L-methionine: step 1/1. The polypeptide is S-adenosylmethionine decarboxylase proenzyme (SAMDC) (Solanum tuberosum (Potato)).